The following is an 81-amino-acid chain: MAVKIRLKRMGAKKRPFYRVVVADSRYPRDGRFIEEIGTYNPLTEPSEIKIDTEKAQKWLKNGAQPTDTVRALLKKVGVIS.

This sequence belongs to the bacterial ribosomal protein bS16 family.

This chain is Small ribosomal subunit protein bS16, found in Acetivibrio thermocellus (strain ATCC 27405 / DSM 1237 / JCM 9322 / NBRC 103400 / NCIMB 10682 / NRRL B-4536 / VPI 7372) (Clostridium thermocellum).